We begin with the raw amino-acid sequence, 430 residues long: Target of rapamycin complex 1 subunit toc1 (430 aa).

Phosphoserine occurs at positions 204 and 399.

The target of rapamycin complex 1 (TORC1) is composed of at least mip1, pop3/wat1, tco89, toc1 and tor2.

The protein localises to the cytoplasm. Component of TORC1, which regulates multiple cellular processes to control cell growth in response to environmental signals. Tor2 is essential for growth. Nutrient limitation and environmental stress signals cause inactivation of TORC1. Active TORC1 positively controls cell growth and ribosome biogenesis by regulating ribosomal protein gene expression. TORC1 negatively controls G1 cell-cycle arrest, sexual development and amino acid uptake. Represses mating, meiosis and sporulation efficiency by interfering with the functions of the transcription factor ste11 and the meiosis-promoting RNA-binding protein mei2. The chain is Target of rapamycin complex 1 subunit toc1 from Schizosaccharomyces pombe (strain 972 / ATCC 24843) (Fission yeast).